Consider the following 124-residue polypeptide: Small ribosomal subunit protein uS12 (124 aa).

Residue Asp-89 is modified to 3-methylthioaspartic acid. N6-acetyllysine is present on Lys-108.

The protein belongs to the universal ribosomal protein uS12 family. As to quaternary structure, part of the 30S ribosomal subunit. Contacts proteins S8 and S17. May interact with IF1 in the 30S initiation complex.

With S4 and S5 plays an important role in translational accuracy. Its function is as follows. Interacts with and stabilizes bases of the 16S rRNA that are involved in tRNA selection in the A site and with the mRNA backbone. Located at the interface of the 30S and 50S subunits, it traverses the body of the 30S subunit contacting proteins on the other side and probably holding the rRNA structure together. The combined cluster of proteins S8, S12 and S17 appears to hold together the shoulder and platform of the 30S subunit. In Escherichia coli O6:K15:H31 (strain 536 / UPEC), this protein is Small ribosomal subunit protein uS12.